A 294-amino-acid chain; its full sequence is Phosphatidylserine decarboxylase proenzyme (294 aa).

Catalysis depends on charge relay system; for autoendoproteolytic cleavage activity residues Asp-100, His-157, and Ser-261. The active-site Schiff-base intermediate with substrate; via pyruvic acid; for decarboxylase activity is Ser-261. At Ser-261 the chain carries Pyruvic acid (Ser); by autocatalysis.

Belongs to the phosphatidylserine decarboxylase family. PSD-B subfamily. Prokaryotic type I sub-subfamily. Heterodimer of a large membrane-associated beta subunit and a small pyruvoyl-containing alpha subunit. Pyruvate serves as cofactor. Post-translationally, is synthesized initially as an inactive proenzyme. Formation of the active enzyme involves a self-maturation process in which the active site pyruvoyl group is generated from an internal serine residue via an autocatalytic post-translational modification. Two non-identical subunits are generated from the proenzyme in this reaction, and the pyruvate is formed at the N-terminus of the alpha chain, which is derived from the carboxyl end of the proenzyme. The autoendoproteolytic cleavage occurs by a canonical serine protease mechanism, in which the side chain hydroxyl group of the serine supplies its oxygen atom to form the C-terminus of the beta chain, while the remainder of the serine residue undergoes an oxidative deamination to produce ammonia and the pyruvoyl prosthetic group on the alpha chain. During this reaction, the Ser that is part of the protease active site of the proenzyme becomes the pyruvoyl prosthetic group, which constitutes an essential element of the active site of the mature decarboxylase.

It is found in the cell membrane. It carries out the reaction a 1,2-diacyl-sn-glycero-3-phospho-L-serine + H(+) = a 1,2-diacyl-sn-glycero-3-phosphoethanolamine + CO2. It participates in phospholipid metabolism; phosphatidylethanolamine biosynthesis; phosphatidylethanolamine from CDP-diacylglycerol: step 2/2. Functionally, catalyzes the formation of phosphatidylethanolamine (PtdEtn) from phosphatidylserine (PtdSer). The polypeptide is Phosphatidylserine decarboxylase proenzyme (Histophilus somni (strain 2336) (Haemophilus somnus)).